Reading from the N-terminus, the 286-residue chain is MSATDLASLEKTIEAAFDNRDNVNTSTKGEVRDAVEAALDLLDAGKVRVATRGADGAWTVNQWLKKAVLLSFRLNDMDVVKGGSGNSTWWDKVPSKFEGWGENHFRAAGFRAVPNCVVRRSAYIAPNAILMPSFVNLGAYVGEGTMVDTWATVGSCAQIGKHVHLSGGVGIGGVLEPMQAGPTIIEDNCFIGARSEVVEGCIVREGSVLGMGVFIGKSTKIVDRATGEVSYGEVPPYSVVVAGSMPSGNATMGNGKPAPHLYCAVIVKRVDEQTRSKTGINELLRD.

This sequence belongs to the transferase hexapeptide repeat family.

It is found in the cytoplasm. It catalyses the reaction (S)-2,3,4,5-tetrahydrodipicolinate + succinyl-CoA + H2O = (S)-2-succinylamino-6-oxoheptanedioate + CoA. It participates in amino-acid biosynthesis; L-lysine biosynthesis via DAP pathway; LL-2,6-diaminopimelate from (S)-tetrahydrodipicolinate (succinylase route): step 1/3. This is 2,3,4,5-tetrahydropyridine-2,6-dicarboxylate N-succinyltransferase from Rhizobium leguminosarum bv. trifolii (strain WSM2304).